We begin with the raw amino-acid sequence, 281 residues long: Hexaprenyl pyrophosphate synthase (281 aa).

The isopentenyl diphosphate site is built by K42, R45, and H74. D81 and D85 together coordinate Mg(2+). Isopentenyl diphosphate is bound at residue R91.

Belongs to the FPP/GGPP synthase family. As to quaternary structure, homodimer. Requires Mg(2+) as cofactor.

The enzyme catalyses 2 isopentenyl diphosphate + (2E,6E,10E)-geranylgeranyl diphosphate = all-trans-hexaprenyl diphosphate + 2 diphosphate. Functionally, catalyzes consecutive E-type condensation of two isopentenyl pyrophosphate (IPP) molecules with an allylic substrate such as geranylgeranyl diphosphate (GGPP), farnesyl diphosphate (FPP) or geranyl diphosphate (GPP) to yield the medium-chain product trans-C30-hexaprenyl pyrophosphate (HexPP). GGPP is the physiological substrate. This Saccharolobus solfataricus (strain ATCC 35092 / DSM 1617 / JCM 11322 / P2) (Sulfolobus solfataricus) protein is Hexaprenyl pyrophosphate synthase (gdS-2).